Reading from the N-terminus, the 222-residue chain is Deoxyribose-phosphate aldolase (222 aa).

The active-site Proton donor/acceptor is D89. The Schiff-base intermediate with acetaldehyde role is filled by K152. The active-site Proton donor/acceptor is K181.

This sequence belongs to the DeoC/FbaB aldolase family. DeoC type 1 subfamily.

It localises to the cytoplasm. The enzyme catalyses 2-deoxy-D-ribose 5-phosphate = D-glyceraldehyde 3-phosphate + acetaldehyde. It participates in carbohydrate degradation; 2-deoxy-D-ribose 1-phosphate degradation; D-glyceraldehyde 3-phosphate and acetaldehyde from 2-deoxy-alpha-D-ribose 1-phosphate: step 2/2. In terms of biological role, catalyzes a reversible aldol reaction between acetaldehyde and D-glyceraldehyde 3-phosphate to generate 2-deoxy-D-ribose 5-phosphate. This Clostridium novyi (strain NT) protein is Deoxyribose-phosphate aldolase.